A 202-amino-acid chain; its full sequence is P25 protein (202 aa).

Residues 7 to 195 (VAIVIYSTYG…EIARIQGETF (189 aa)) enclose the Flavodoxin-like domain. A Phosphoserine modification is found at S181.

The protein belongs to the WrbA family. In terms of assembly, homodimer.

Unknown. Target of pap1 transcription factor. Confers brefeldin A resistance in S.pombe. In Schizosaccharomyces pombe (strain 972 / ATCC 24843) (Fission yeast), this protein is P25 protein (obr1).